The sequence spans 88 residues: Co-chaperonin GroES (88 aa).

The protein belongs to the GroES chaperonin family. Heptamer of 7 subunits arranged in a ring. Interacts with the chaperonin GroEL.

The protein resides in the cytoplasm. Functionally, together with the chaperonin GroEL, plays an essential role in assisting protein folding. The GroEL-GroES system forms a nano-cage that allows encapsulation of the non-native substrate proteins and provides a physical environment optimized to promote and accelerate protein folding. GroES binds to the apical surface of the GroEL ring, thereby capping the opening of the GroEL channel. The sequence is that of Co-chaperonin GroES from Thermodesulfovibrio yellowstonii (strain ATCC 51303 / DSM 11347 / YP87).